Consider the following 352-residue polypeptide: MSILAEKLSSILKRYDELTALLSSAEVISDIKKLTELSKEQSSIEEISIASKEYLSVLENIKENKELLEDKELSELAKEELKILEIQKSDLETAIKQLLIPKDPNDDKNIYLELRAGTGGNEAGIFVGDLFKAYCRYADLKKWRVEIVSSSENSVGGYKEIIALIKGKGVYSRLKFEAGTHRVQRVPETESQGRIHTSAITVAIMPEVDDVEVSINPSDLKIEVFRAGGHGGQCVNTTDSAVRITHLPTNISVSMQDEKSQHKNKDKALKILKARLYEKQIEEQQLANAKDRKEQVGSGDRSERIRTYNYPQNRLSEHRINLTLYSLEEIMLSGNLDEVINPLIAHAQSQFE.

Glutamine 233 carries the post-translational modification N5-methylglutamine. Residues 288 to 309 (NAKDRKEQVGSGDRSERIRTYN) form a disordered region. Basic and acidic residues predominate over residues 289 to 306 (AKDRKEQVGSGDRSERIR).

Belongs to the prokaryotic/mitochondrial release factor family. In terms of processing, methylated by PrmC. Methylation increases the termination efficiency of RF1.

Its subcellular location is the cytoplasm. Its function is as follows. Peptide chain release factor 1 directs the termination of translation in response to the peptide chain termination codons UAG and UAA. The protein is Peptide chain release factor 1 of Helicobacter pylori (strain HPAG1).